The sequence spans 299 residues: Mitochondrial 2-oxodicarboxylate carrier (299 aa).

3 Solcar repeats span residues Arg-11 to Leu-100, Ser-107 to Met-196, and Leu-205 to Trp-294. The next 6 helical transmembrane spans lie at Ile-17–Val-37, Phe-70–Val-89, Ala-113–Val-133, Gly-167–Phe-187, Leu-205–Asn-225, and Leu-277–Glu-297.

It belongs to the mitochondrial carrier (TC 2.A.29) family. In terms of tissue distribution, expressed in placenta, gall bladder and colon.

Its subcellular location is the mitochondrion inner membrane. The catalysed reaction is 2-oxoadipate(in) + 2-oxoglutarate(out) = 2-oxoadipate(out) + 2-oxoglutarate(in). It carries out the reaction hexanedioate(in) + 2-oxoglutarate(out) = hexanedioate(out) + 2-oxoglutarate(in). The enzyme catalyses L-2-aminoadipate(in) + 2-oxoglutarate(out) = L-2-aminoadipate(out) + 2-oxoglutarate(in). It catalyses the reaction glutarate(in) + 2-oxoglutarate(out) = glutarate(out) + 2-oxoglutarate(in). The catalysed reaction is 2-oxoheptanedioate(in) + 2-oxoglutarate(out) = 2-oxoheptanedioate(out) + 2-oxoglutarate(in). It carries out the reaction heptanedioate(in) + 2-oxoglutarate(out) = heptanedioate(out) + 2-oxoglutarate(in). The enzyme catalyses citrate(in) + 2-oxoglutarate(out) = citrate(out) + 2-oxoglutarate(in). Its function is as follows. Transports dicarboxylates across the inner membranes of mitochondria by a counter-exchange mechanism. Can transport 2-oxoadipate (2-oxohexanedioate), 2-oxoglutarate, adipate (hexanedioate), glutarate, and to a lesser extent, pimelate (heptanedioate), 2-oxopimelate (2-oxoheptanedioate), 2-aminoadipate (2-aminohexanedioate), oxaloacetate, and citrate. Plays a central role in catabolism of lysine, hydroxylysine, and tryptophan, by transporting common metabolite intermediates (such as 2-oxoadipate) into the mitochondria, where it is converted into acetyl-CoA and can enter the citric acid (TCA) cycle. The polypeptide is Mitochondrial 2-oxodicarboxylate carrier (SLC25A21) (Homo sapiens (Human)).